The chain runs to 89 residues: uncharacterized protein (89 aa).

Positions 1–19 are cleaved as a signal peptide; the sequence is MIVRTLLIAAALLGGTAQA.

It localises to the secreted. This is an uncharacterized protein from Pseudomonas aeruginosa (strain UCBPP-PA14).